The sequence spans 155 residues: RNA pyrophosphohydrolase (155 aa).

Residues R5–E147 enclose the Nudix hydrolase domain. The Nudix box signature appears at G42–G63.

Belongs to the Nudix hydrolase family. RppH subfamily. It depends on a divalent metal cation as a cofactor.

Its function is as follows. Accelerates the degradation of transcripts by removing pyrophosphate from the 5'-end of triphosphorylated RNA, leading to a more labile monophosphorylated state that can stimulate subsequent ribonuclease cleavage. In Nitratiruptor sp. (strain SB155-2), this protein is RNA pyrophosphohydrolase.